The primary structure comprises 211 residues: FMN-dependent NADH:quinone oxidoreductase (211 aa).

Residue 17 to 19 coordinates FMN; that stretch reads SYS.

It belongs to the azoreductase type 1 family. Homodimer. It depends on FMN as a cofactor.

The catalysed reaction is 2 a quinone + NADH + H(+) = 2 a 1,4-benzosemiquinone + NAD(+). It catalyses the reaction N,N-dimethyl-1,4-phenylenediamine + anthranilate + 2 NAD(+) = 2-(4-dimethylaminophenyl)diazenylbenzoate + 2 NADH + 2 H(+). Functionally, quinone reductase that provides resistance to thiol-specific stress caused by electrophilic quinones. Also exhibits azoreductase activity. Catalyzes the reductive cleavage of the azo bond in aromatic azo compounds to the corresponding amines. This chain is FMN-dependent NADH:quinone oxidoreductase, found in Bacillus velezensis (strain DSM 23117 / BGSC 10A6 / LMG 26770 / FZB42) (Bacillus amyloliquefaciens subsp. plantarum).